We begin with the raw amino-acid sequence, 321 residues long: Tetraketide alpha-pyrone reductase 2 (321 aa).

S2 bears the N-acetylserine mark. Residues 4–28, K40, and Y160 each bind NADP(+); that span reads YLVT…GHTV.

Belongs to the NAD(P)-dependent epimerase/dehydratase family. Dihydroflavonol-4-reductase subfamily.

Its subcellular location is the cytoplasm. Functionally, may be involved in the biosynthesis of hydroxylated tetraketide compounds that serve as sporopollenin precursors (the main constituents of exine). Acts on tetraketide alpha-pyrones and reduces the carbonyl function on the tetraketide alkyl chain to a secondary alcohol function. In Arabidopsis thaliana (Mouse-ear cress), this protein is Tetraketide alpha-pyrone reductase 2 (TKPR2).